The chain runs to 303 residues: Oxygen-dependent coproporphyrinogen-III oxidase (303 aa).

S93 provides a ligand contact to substrate. Residues H97 and H107 each contribute to the a divalent metal cation site. H107 (proton donor) is an active-site residue. 109–111 is a binding site for substrate; sequence NVR. H149 and H179 together coordinate a divalent metal cation. The important for dimerization stretch occupies residues 244–279; it reads YVEFNLVFDRGTLFGLQSGGRTESILLSMPPLAQWR. 262–264 contacts substrate; that stretch reads GGR.

Belongs to the aerobic coproporphyrinogen-III oxidase family. In terms of assembly, homodimer. A divalent metal cation is required as a cofactor.

It is found in the cytoplasm. It catalyses the reaction coproporphyrinogen III + O2 + 2 H(+) = protoporphyrinogen IX + 2 CO2 + 2 H2O. It participates in porphyrin-containing compound metabolism; protoporphyrin-IX biosynthesis; protoporphyrinogen-IX from coproporphyrinogen-III (O2 route): step 1/1. Involved in the heme biosynthesis. Catalyzes the aerobic oxidative decarboxylation of propionate groups of rings A and B of coproporphyrinogen-III to yield the vinyl groups in protoporphyrinogen-IX. The polypeptide is Oxygen-dependent coproporphyrinogen-III oxidase (Bordetella parapertussis (strain 12822 / ATCC BAA-587 / NCTC 13253)).